The primary structure comprises 246 residues: UDP-N-acetyl-D-mannosaminuronic acid transferase (246 aa).

Belongs to the glycosyltransferase 26 family.

The enzyme catalyses UDP-N-acetyl-alpha-D-mannosaminouronate + N-acetyl-alpha-D-glucosaminyl-di-trans,octa-cis-undecaprenyl diphosphate = beta-D-ManNAcA-(1-&gt;4)-alpha-D-GlcNAc-di-trans,octa-cis-undecaprenyl diphosphate + UDP + H(+). Its pathway is bacterial outer membrane biogenesis; enterobacterial common antigen biosynthesis. In terms of biological role, catalyzes the synthesis of Und-PP-GlcNAc-ManNAcA (Lipid II), the second lipid-linked intermediate involved in enterobacterial common antigen (ECA) synthesis. This chain is UDP-N-acetyl-D-mannosaminuronic acid transferase, found in Shigella flexneri.